Here is a 352-residue protein sequence, read N- to C-terminus: Biotin synthase (352 aa).

The 219-residue stretch at 44–262 (NRVQVSTLLS…LAVARLLMPK (219 aa)) folds into the Radical SAM core domain. Positions 59, 63, and 66 each coordinate [4Fe-4S] cluster. Positions 103, 134, 194, and 266 each coordinate [2Fe-2S] cluster.

Belongs to the radical SAM superfamily. Biotin synthase family. In terms of assembly, homodimer. [4Fe-4S] cluster is required as a cofactor. It depends on [2Fe-2S] cluster as a cofactor.

It catalyses the reaction (4R,5S)-dethiobiotin + (sulfur carrier)-SH + 2 reduced [2Fe-2S]-[ferredoxin] + 2 S-adenosyl-L-methionine = (sulfur carrier)-H + biotin + 2 5'-deoxyadenosine + 2 L-methionine + 2 oxidized [2Fe-2S]-[ferredoxin]. It participates in cofactor biosynthesis; biotin biosynthesis; biotin from 7,8-diaminononanoate: step 2/2. Catalyzes the conversion of dethiobiotin (DTB) to biotin by the insertion of a sulfur atom into dethiobiotin via a radical-based mechanism. In Pseudomonas putida (strain W619), this protein is Biotin synthase.